We begin with the raw amino-acid sequence, 125 residues long: Fluoride-specific ion channel FluC (125 aa).

4 helical membrane-spanning segments follow: residues 2–22, 35–55, 68–88, and 98–118; these read WLSILAIFCGAGLGALLRTGF, LGTLISNMVGGYLIGIALAFF, LIITGFLGGLTTFSSFSAEVV, and WALGTALLHLVGSLVLTLLGI. Positions 75 and 78 each coordinate Na(+).

The protein belongs to the fluoride channel Fluc/FEX (TC 1.A.43) family.

It is found in the cell inner membrane. The catalysed reaction is fluoride(in) = fluoride(out). With respect to regulation, na(+) is not transported, but it plays an essential structural role and its presence is essential for fluoride channel function. Functionally, fluoride-specific ion channel. Important for reducing fluoride concentration in the cell, thus reducing its toxicity. The polypeptide is Fluoride-specific ion channel FluC (Polynucleobacter asymbioticus (strain DSM 18221 / CIP 109841 / QLW-P1DMWA-1) (Polynucleobacter necessarius subsp. asymbioticus)).